A 476-amino-acid chain; its full sequence is Tryptophan--tRNA ligase, cytoplasmic (476 aa).

A dispensable to the catalytic activity region spans residues 1–117 (MADMSNGEQG…LIVRFGSSKI (117 aa)). Residues 13-69 (SPLELFHSIAAQGELVRDLKARNAAKDEIDSAVKMLLSLKTSYKAATGEDYKVDCPP) enclose the WHEP-TRS domain. The disordered stretch occupies residues 63 to 83 (YKVDCPPGDPAPESGEGLDAT). K159 is subject to N6-succinyllysine. The short motif at 169 to 178 (PSSEAMHVGH) is the 'HIGH' region element. The 'KMSKS' region signature appears at 354-358 (KMSAS). Position 356 is a phosphoserine (S356).

It belongs to the class-I aminoacyl-tRNA synthetase family. In terms of assembly, homodimer. Interacts with oxidized form of GAPDH. In terms of processing, proteolytic cleavage generates 2 forms; T1-TrpRS and T2-TrpRS.

Its subcellular location is the cytoplasm. The catalysed reaction is tRNA(Trp) + L-tryptophan + ATP = L-tryptophyl-tRNA(Trp) + AMP + diphosphate + H(+). Its function is as follows. T1-TrpRS has aminoacylation activity while T2-TrpRS lacks it. T1-TrpRS and T2-TrpRS possess angiostatic activity. T2-TrpRS inhibits fluid shear stress-activated responses of endothelial cells. Regulates ERK, Akt, and eNOS activation pathways that are associated with angiogenesis, cytoskeletal reorganization and shear stress-responsive gene expression. The protein is Tryptophan--tRNA ligase, cytoplasmic (WARS1) of Bos taurus (Bovine).